Here is a 510-residue protein sequence, read N- to C-terminus: Photosystem II CP47 reaction center protein (510 aa).

The Cytoplasmic segment spans residues 2-16; the sequence is GLPWYRVHTVLINDP. A helical membrane pass occupies residues 17 to 37; that stretch reads GRLIAAHLMHTALVAGWAGSM. Topologically, residues 38-94 are lumenal; sequence ALYELATFDPSDPVLNPMWRQGMFVLPFMARLGVTGSWSGWSITGETGIDPGFWSFE. A helical membrane pass occupies residues 95–116; sequence GVALAHIVLSGLLFLAACWHWV. The Cytoplasmic portion of the chain corresponds to 117 to 134; that stretch reads YWDLELFRDPRTGEPALD. Residues 135 to 157 form a helical membrane-spanning segment; it reads LPKMFGIHLFLAGLLCFGFGAFH. The Lumenal segment spans residues 158-196; the sequence is LTGLFGPGMWVSDPYGLTGSVQPVAPEWGPDGFNPYNPG. Residues 197–218 traverse the membrane as a helical segment; sequence GVVAHHIAAGIVGIIAGLFHIL. Residues 219–233 are Cytoplasmic-facing; it reads VRPPQRLYKALRMGN. A helical transmembrane segment spans residues 234–254; that stretch reads IETVLSSSIAAVFFAAFVVAG. Residues 255–450 are Lumenal-facing; the sequence is TMWYGSATTP…GIFRTSPRGW (196 aa). The helical transmembrane segment at 451–473 threads the bilayer; sequence FTFAHAVFALLFFFGHIWHGART. At 474–510 the chain is on the cytoplasmic side; sequence LFRDVFSGIDPELSPEQVEWGFYQKVGDVTTRRKEAV.

In terms of assembly, PSII is composed of 1 copy each of membrane proteins PsbA, PsbB, PsbC, PsbD, PsbE, PsbF, PsbH, PsbI, PsbJ, PsbK, PsbL, PsbM, PsbT, PsbX, PsbY, PsbZ, Psb30/Ycf12, peripheral proteins PsbO, CyanoQ (PsbQ), PsbU, PsbV and a large number of cofactors. It forms dimeric complexes. Part of a photosystem II (PSII) assembly intermediate complex PSII-I; crystallized from a strain deleted of psbJ, it forms monomeric PSII before addition of the oxygen evolving complex. PSII-I includes 3 assembly factors not found in mature PSII (Psb27, Psb28 and Psb34). The cofactor is Binds multiple chlorophylls. PSII binds additional chlorophylls, carotenoids and specific lipids..

It localises to the cellular thylakoid membrane. Functionally, one of the components of the core complex of photosystem II (PSII). It binds chlorophyll and helps catalyze the primary light-induced photochemical processes of PSII. PSII is a light-driven water:plastoquinone oxidoreductase, using light energy to abstract electrons from H(2)O, generating O(2) and a proton gradient subsequently used for ATP formation. This Thermosynechococcus vestitus (strain NIES-2133 / IAM M-273 / BP-1) protein is Photosystem II CP47 reaction center protein.